The chain runs to 180 residues: Nucleoside triphosphate/diphosphate phosphatase (180 aa).

The Proton donor role is filled by arginine 26. Asparagine 90, aspartate 106, aspartate 108, aspartate 110, aspartate 123, and glutamate 126 together coordinate Mg(2+).

This sequence belongs to the Ntdp family. Mg(2+) serves as cofactor.

The enzyme catalyses a ribonucleoside 5'-triphosphate + H2O = a ribonucleoside 5'-diphosphate + phosphate + H(+). It carries out the reaction a ribonucleoside 5'-diphosphate + H2O = a ribonucleoside 5'-phosphate + phosphate + H(+). Its function is as follows. Has nucleoside phosphatase activity towards nucleoside triphosphates and nucleoside diphosphates. This is Nucleoside triphosphate/diphosphate phosphatase from Staphylococcus epidermidis (strain ATCC 35984 / DSM 28319 / BCRC 17069 / CCUG 31568 / BM 3577 / RP62A).